The following is a 352-amino-acid chain: Probable gamma-glutamyl hydrolase 3 (352 aa).

An N-terminal signal peptide occupies residues 1–19 (MWRFCFFLSLLFFDVSAVK). The Gamma-glutamyl hydrolase domain maps to 49–352 (AADPNLNYKP…SGDDEVYIFT (304 aa)). C166 functions as the Nucleophile in the catalytic mechanism. Residue H279 is part of the active site.

Belongs to the peptidase C26 family.

Its subcellular location is the vacuole. The protein resides in the secreted. The protein localises to the extracellular space. It is found in the cell wall. It catalyses the reaction (6S)-5,6,7,8-tetrahydrofolyl-(gamma-L-Glu)(n) + (n-1) H2O = (6S)-5,6,7,8-tetrahydrofolate + (n-1) L-glutamate. In terms of biological role, cleaves the polyglutamate sidechains of folate polyglutamates in the vacuole. Is important for polyglutamyl tail length determination before vacuolar exit. Plays a role on folate stability and intracellular folate content. The protein is Probable gamma-glutamyl hydrolase 3 (GGH3) of Arabidopsis thaliana (Mouse-ear cress).